A 507-amino-acid chain; its full sequence is Putative propionyl-CoA carboxylase beta chain (507 aa).

The span at 1-25 shows a compositional bias: basic and acidic residues; that stretch reads MNEHMDHFYTKRKQAEEGGGREKLA. The disordered stretch occupies residues 1 to 30; that stretch reads MNEHMDHFYTKRKQAEEGGGREKLAQQRQK. The 254-residue stretch at 1-254 folds into the CoA carboxyltransferase N-terminal domain; the sequence is MNEHMDHFYT…NGRTTEPKPE (254 aa). The tract at residues 1-501 is carboxyltransferase; that stretch reads MNEHMDHFYT…HKTEERPKKK (501 aa). The 246-residue stretch at 256–501 folds into the CoA carboxyltransferase C-terminal domain; that stretch reads EASRPLLNRL…HKTEERPKKK (246 aa).

This sequence belongs to the AccD/PCCB family. Probably a dodecamer composed of six biotin-containing alpha subunits and six beta subunits.

It catalyses the reaction propanoyl-CoA + hydrogencarbonate + ATP = (S)-methylmalonyl-CoA + ADP + phosphate + H(+). It functions in the pathway metabolic intermediate metabolism; propanoyl-CoA degradation; succinyl-CoA from propanoyl-CoA: step 1/3. The polypeptide is Putative propionyl-CoA carboxylase beta chain (yqjD) (Bacillus subtilis (strain 168)).